Consider the following 182-residue polypeptide: MTFEQLIPLIIMAFALGMDAFSVSLGMGMMALKIRQILYIGVTIGIFHIIMPFIGMVLGRFLSEQYGDIAHFAGAILLIGLGFYIVYSSILENEETRTAPIGISLFVFAFGVSIDSFSVGLSLGIYGAQTVITILLFGFISMLLAWTGLFIGRHAKGMLGTYGEIVGGIILVGFGLYLLFPI.

6 helical membrane passes run 6-26 (LIPLIIMAFALGMDAFSVSLG), 37-57 (ILYIGVTIGIFHIIMPFIGMV), 71-91 (HFAGAILLIGLGFYIVYSSIL), 101-121 (IGISLFVFAFGVSIDSFSVGL), 131-151 (VITILLFGFISMLLAWTGLFI), and 162-182 (YGEIVGGIILVGFGLYLLFPI).

The protein belongs to the MntP (TC 9.B.29) family.

It is found in the cell membrane. Probably functions as a manganese efflux pump. The chain is Putative manganese efflux pump MntP from Bacillus cereus (strain Q1).